A 343-amino-acid chain; its full sequence is MAESSGSWRDSYKGMSSDNIKGLVLALSSSLFIGASFIVKKKGLKKAASTGTRAGVGGYSYLYEPLWWIGMTTMLLGEIANFAAYAFAPAILVTPLGAVSIIISAVLAHIILREKLHIFGILGCALCVVGSTTIVLHAPQEREIDSVIEVWNLATEPAFMFYASLVIGAAVFLIIRFVPQYGQTNVMVYIGICSLVGSLSVMSVKALGIALKLTFSGTNQLFYPQTWIFTLVVLTCVVTQLNYLNKALDTFNTAIVSPIYYVMFTSLTILASVIMFKDWDRQNGTQIVTEICGFVTILSGTFLLHRTKDMVEGSSVILPLRISKHINEEEGIPLRRQESLRSP.

Residues 1–18 lie on the Extracellular side of the membrane; the sequence is MAESSGSWRDSYKGMSSD. Residues 19-39 traverse the membrane as a helical segment; the sequence is NIKGLVLALSSSLFIGASFIV. Topologically, residues 40–66 are cytoplasmic; it reads KKKGLKKAASTGTRAGVGGYSYLYEPL. The helical transmembrane segment at 67–87 threads the bilayer; it reads WWIGMTTMLLGEIANFAAYAF. The Extracellular portion of the chain corresponds to 88 to 90; the sequence is APA. Residues 91-111 traverse the membrane as a helical segment; the sequence is ILVTPLGAVSIIISAVLAHII. Topologically, residues 112–115 are cytoplasmic; the sequence is LREK. The chain crosses the membrane as a helical span at residues 116–136; the sequence is LHIFGILGCALCVVGSTTIVL. Residues 137-157 are Extracellular-facing; it reads HAPQEREIDSVIEVWNLATEP. The helical transmembrane segment at 158–178 threads the bilayer; sequence AFMFYASLVIGAAVFLIIRFV. Residues 179–189 are Cytoplasmic-facing; the sequence is PQYGQTNVMVY. The chain crosses the membrane as a helical span at residues 190–210; it reads IGICSLVGSLSVMSVKALGIA. Over 211–220 the chain is Extracellular; sequence LKLTFSGTNQ. Residues 221–241 traverse the membrane as a helical segment; sequence LFYPQTWIFTLVVLTCVVTQL. At 242-254 the chain is on the cytoplasmic side; sequence NYLNKALDTFNTA. A helical membrane pass occupies residues 255 to 275; it reads IVSPIYYVMFTSLTILASVIM. The Extracellular portion of the chain corresponds to 276–283; it reads FKDWDRQN. A helical transmembrane segment spans residues 284-304; sequence GTQIVTEICGFVTILSGTFLL. At 305–343 the chain is on the cytoplasmic side; the sequence is HRTKDMVEGSSVILPLRISKHINEEEGIPLRRQESLRSP.

Belongs to the NIPA (TC 2.A.7) family. Homodimer.

It is found in the cell membrane. It localises to the early endosome. Acts as a Mg(2+) transporter. Can also transport other divalent cations such as Fe(2+), Sr(2+), Ba(2+), Mn(2+) and Co(2+) but to a much less extent than Mg(2+). This is Probable magnesium transporter NIPA4 from Arabidopsis thaliana (Mouse-ear cress).